A 457-amino-acid chain; its full sequence is tRNA-2-methylthio-N(6)-dimethylallyladenosine synthase (457 aa).

The MTTase N-terminal domain maps to 4–119 (RNFHIITFGC…APDAIERLYA (116 aa)). Residues C13, C48, C82, C164, C168, and C171 each contribute to the [4Fe-4S] cluster site. The Radical SAM core domain occupies 150–385 (NTLALMAYVN…QATQLEHSTS (236 aa)). Positions 388 to 456 (KSRVGVETTV…KHSLVAEPLI (69 aa)) constitute a TRAM domain.

Belongs to the methylthiotransferase family. MiaB subfamily. Monomer. [4Fe-4S] cluster serves as cofactor.

The protein localises to the cytoplasm. The catalysed reaction is N(6)-dimethylallyladenosine(37) in tRNA + (sulfur carrier)-SH + AH2 + 2 S-adenosyl-L-methionine = 2-methylsulfanyl-N(6)-dimethylallyladenosine(37) in tRNA + (sulfur carrier)-H + 5'-deoxyadenosine + L-methionine + A + S-adenosyl-L-homocysteine + 2 H(+). Functionally, catalyzes the methylthiolation of N6-(dimethylallyl)adenosine (i(6)A), leading to the formation of 2-methylthio-N6-(dimethylallyl)adenosine (ms(2)i(6)A) at position 37 in tRNAs that read codons beginning with uridine. The protein is tRNA-2-methylthio-N(6)-dimethylallyladenosine synthase of Lawsonia intracellularis (strain PHE/MN1-00).